The following is a 662-amino-acid chain: PAN2-PAN3 deadenylation complex subunit PAN3 (662 aa).

Disordered regions lie at residues Met1 to Asn26 and Thr59 to Thr131. The C3H1-type zinc-finger motif lies at Asn26 to His55. Over residues Asp72–Gly85 the composition is skewed to polar residues. Low complexity predominate over residues Ser86–Ser102. Polar residues predominate over residues Arg114–Ser126. Residues Gln265–Ser525 are pseudokinase domain. ATP is bound by residues Arg317, Asp366–Thr373, and Ser425–Lys426. Residues Ser526 to Phe564 adopt a coiled-coil conformation. The segment at Val565 to His662 is knob domain.

The protein belongs to the protein kinase superfamily. PAN3 family. As to quaternary structure, homodimer. Forms a heterotrimer with a catalytic subunit pan2 to form the poly(A)-nuclease (PAN) deadenylation complex. Interacts (via PAM-2 motif) with poly(A)-binding protein pab1 (via PABC domain), conferring substrate specificity of the enzyme complex.

Its subcellular location is the cytoplasm. Functionally, regulatory subunit of the poly(A)-nuclease (PAN) deadenylation complex, one of two cytoplasmic mRNA deadenylases involved in mRNA turnover. PAN specifically shortens poly(A) tails of RNA and the activity is stimulated by poly(A)-binding protein pab1. PAN deadenylation is followed by rapid degradation of the shortened mRNA tails by the CCR4-NOT complex. Deadenylated mRNAs are then degraded by two alternative mechanisms, namely exosome-mediated 3'-5' exonucleolytic degradation, or deadenylation-dependent mRNA decaping and subsequent 5'-3' exonucleolytic degradation by xrn1. May also be involved in post-transcriptional maturation of mRNA poly(A) tails. pan3 acts as a positive regulator for PAN activity, recruiting the catalytic subunit pan2 to mRNA via its interaction with RNA and with pab1. The chain is PAN2-PAN3 deadenylation complex subunit PAN3 from Aspergillus oryzae (strain ATCC 42149 / RIB 40) (Yellow koji mold).